Reading from the N-terminus, the 501-residue chain is Aspartate--tRNA ligase, cytoplasmic (501 aa).

Thr-52 bears the Phosphothreonine mark. Lys-74 is subject to N6-acetyllysine. Glu-229 provides a ligand contact to L-aspartate. A Phosphoserine modification is found at Ser-249. An aspartate region spans residues 251 to 254 (QLYK). Position 273 (Arg-273) interacts with L-aspartate. Residues 273–275 (RAE) and 281–283 (RHL) each bind ATP. Lys-374 carries the N6-acetyllysine modification. Residue Glu-424 coordinates ATP. L-aspartate contacts are provided by Ser-427 and Arg-431. 472 to 475 (GLER) contributes to the ATP binding site.

The protein belongs to the class-II aminoacyl-tRNA synthetase family. Type 2 subfamily. In terms of assembly, homodimer. Part of a multisubunit complex that groups tRNA ligases for Arg (RARS1), Asp (DARS1), Gln (QARS1), Ile (IARS1), Leu (LARS1), Lys (KARS1), Met (MARS1) the bifunctional ligase for Glu and Pro (EPRS1) and the auxiliary subunits AIMP1/p43, AIMP2/p38 and EEF1E1/p18.

It localises to the cytoplasm. The catalysed reaction is tRNA(Asp) + L-aspartate + ATP = L-aspartyl-tRNA(Asp) + AMP + diphosphate. Its function is as follows. Catalyzes the specific attachment of an amino acid to its cognate tRNA in a 2 step reaction: the amino acid (AA) is first activated by ATP to form AA-AMP and then transferred to the acceptor end of the tRNA. The sequence is that of Aspartate--tRNA ligase, cytoplasmic (Dars1) from Rattus norvegicus (Rat).